Reading from the N-terminus, the 473-residue chain is Photosystem II CP43 reaction center protein (473 aa).

Residues Met-1–Glu-14 constitute a propeptide that is removed on maturation. Thr-15 carries the N-acetylthreonine modification. The residue at position 15 (Thr-15) is a Phosphothreonine. A run of 5 helical transmembrane segments spans residues Leu-69 to Ala-93, Leu-134 to Asn-155, Lys-178 to Thr-200, Lys-255 to Ser-275, and Trp-291 to Ala-312. Glu-367 serves as a coordination point for [CaMn4O5] cluster. The chain crosses the membrane as a helical span at residues Arg-447–Pro-471.

The protein belongs to the PsbB/PsbC family. PsbC subfamily. As to quaternary structure, PSII is composed of 1 copy each of membrane proteins PsbA, PsbB, PsbC, PsbD, PsbE, PsbF, PsbH, PsbI, PsbJ, PsbK, PsbL, PsbM, PsbT, PsbX, PsbY, PsbZ, Psb30/Ycf12, at least 3 peripheral proteins of the oxygen-evolving complex and a large number of cofactors. It forms dimeric complexes. Binds multiple chlorophylls and provides some of the ligands for the Ca-4Mn-5O cluster of the oxygen-evolving complex. It may also provide a ligand for a Cl- that is required for oxygen evolution. PSII binds additional chlorophylls, carotenoids and specific lipids. serves as cofactor.

It is found in the plastid. It localises to the chloroplast thylakoid membrane. One of the components of the core complex of photosystem II (PSII). It binds chlorophyll and helps catalyze the primary light-induced photochemical processes of PSII. PSII is a light-driven water:plastoquinone oxidoreductase, using light energy to abstract electrons from H(2)O, generating O(2) and a proton gradient subsequently used for ATP formation. This is Photosystem II CP43 reaction center protein from Physcomitrium patens (Spreading-leaved earth moss).